Reading from the N-terminus, the 225-residue chain is Shikimate kinase (225 aa).

An ATP-binding site is contributed by 27–32; it reads GAGKTT. Residue threonine 31 coordinates Mg(2+). Aspartate 49, arginine 73, and glycine 95 together coordinate substrate. Position 132 (arginine 132) interacts with ATP. Arginine 150 is a binding site for substrate. Positions 186–225 are disordered; that stretch reads GGSEPDEAADAAGGSEPDEAADAAGGSEPDEAADAAGGKR.

It belongs to the shikimate kinase family. As to quaternary structure, monomer. It depends on Mg(2+) as a cofactor.

The protein localises to the cytoplasm. The enzyme catalyses shikimate + ATP = 3-phosphoshikimate + ADP + H(+). It participates in metabolic intermediate biosynthesis; chorismate biosynthesis; chorismate from D-erythrose 4-phosphate and phosphoenolpyruvate: step 5/7. Catalyzes the specific phosphorylation of the 3-hydroxyl group of shikimic acid using ATP as a cosubstrate. This Frankia casuarinae (strain DSM 45818 / CECT 9043 / HFP020203 / CcI3) protein is Shikimate kinase.